Consider the following 54-residue polypeptide: Ribulose bisphosphate carboxylase large chain (54 aa).

A propeptide spanning residues 1–2 is cleaved from the precursor; sequence MS. Position 3 is an N-acetylproline (Pro-3). Residue Lys-14 is modified to N6,N6,N6-trimethyllysine.

The protein belongs to the RuBisCO large chain family. Type I subfamily. As to quaternary structure, heterohexadecamer of 8 large chains and 8 small chains.

The protein localises to the plastid. It localises to the chloroplast. The catalysed reaction is 2 (2R)-3-phosphoglycerate + 2 H(+) = D-ribulose 1,5-bisphosphate + CO2 + H2O. It catalyses the reaction D-ribulose 1,5-bisphosphate + O2 = 2-phosphoglycolate + (2R)-3-phosphoglycerate + 2 H(+). In terms of biological role, ruBisCO catalyzes two reactions: the carboxylation of D-ribulose 1,5-bisphosphate, the primary event in carbon dioxide fixation, as well as the oxidative fragmentation of the pentose substrate in the photorespiration process. Both reactions occur simultaneously and in competition at the same active site. The sequence is that of Ribulose bisphosphate carboxylase large chain (rbcL) from Rhamnus cathartica (Common buckthorn).